A 396-amino-acid polypeptide reads, in one-letter code: Phosphoglycerate kinase (396 aa).

Residues 21–23 (DLN), R36, 59–62 (HFGR), R118, and R151 each bind substrate. ATP-binding positions include K201, E323, and 353–356 (GGDT).

The protein belongs to the phosphoglycerate kinase family. Monomer.

The protein resides in the cytoplasm. The enzyme catalyses (2R)-3-phosphoglycerate + ATP = (2R)-3-phospho-glyceroyl phosphate + ADP. It functions in the pathway carbohydrate degradation; glycolysis; pyruvate from D-glyceraldehyde 3-phosphate: step 2/5. The chain is Phosphoglycerate kinase from Rhodospirillum centenum (strain ATCC 51521 / SW).